We begin with the raw amino-acid sequence, 432 residues long: Gamma-glutamyl phosphate reductase (432 aa).

This sequence belongs to the gamma-glutamyl phosphate reductase family.

It is found in the cytoplasm. The catalysed reaction is L-glutamate 5-semialdehyde + phosphate + NADP(+) = L-glutamyl 5-phosphate + NADPH + H(+). It functions in the pathway amino-acid biosynthesis; L-proline biosynthesis; L-glutamate 5-semialdehyde from L-glutamate: step 2/2. In terms of biological role, catalyzes the NADPH-dependent reduction of L-glutamate 5-phosphate into L-glutamate 5-semialdehyde and phosphate. The product spontaneously undergoes cyclization to form 1-pyrroline-5-carboxylate. The protein is Gamma-glutamyl phosphate reductase of Kineococcus radiotolerans (strain ATCC BAA-149 / DSM 14245 / SRS30216).